The chain runs to 419 residues: Glutamyl-tRNA reductase (419 aa).

Substrate contacts are provided by residues 49-52, Ser107, 112-114, and Gln118; these read TCNR and EPQ. Residue Cys50 is the Nucleophile of the active site. 187–192 lines the NADP(+) pocket; it reads GAGETI.

Belongs to the glutamyl-tRNA reductase family. As to quaternary structure, homodimer.

It carries out the reaction (S)-4-amino-5-oxopentanoate + tRNA(Glu) + NADP(+) = L-glutamyl-tRNA(Glu) + NADPH + H(+). Its pathway is porphyrin-containing compound metabolism; protoporphyrin-IX biosynthesis; 5-aminolevulinate from L-glutamyl-tRNA(Glu): step 1/2. In terms of biological role, catalyzes the NADPH-dependent reduction of glutamyl-tRNA(Glu) to glutamate 1-semialdehyde (GSA). This Vibrio vulnificus (strain CMCP6) protein is Glutamyl-tRNA reductase.